Here is a 469-residue protein sequence, read N- to C-terminus: 3-isopropylmalate dehydratase large subunit (469 aa).

The [4Fe-4S] cluster site is built by cysteine 349, cysteine 410, and cysteine 413.

Belongs to the aconitase/IPM isomerase family. LeuC type 1 subfamily. In terms of assembly, heterodimer of LeuC and LeuD. [4Fe-4S] cluster is required as a cofactor.

The enzyme catalyses (2R,3S)-3-isopropylmalate = (2S)-2-isopropylmalate. It participates in amino-acid biosynthesis; L-leucine biosynthesis; L-leucine from 3-methyl-2-oxobutanoate: step 2/4. In terms of biological role, catalyzes the isomerization between 2-isopropylmalate and 3-isopropylmalate, via the formation of 2-isopropylmaleate. The sequence is that of 3-isopropylmalate dehydratase large subunit from Neisseria gonorrhoeae (strain ATCC 700825 / FA 1090).